We begin with the raw amino-acid sequence, 766 residues long: BMP/retinoic acid-inducible neural-specific protein 3 (766 aa).

The N-terminal stretch at 1–33 (MIWRSRAGAELFSLMALWEWIALSLHCWVLAVA) is a signal peptide. The MACPF domain maps to 74-264 (RYKIYREFGR…FVQAALSYIA (191 aa)). Residues asparagine 168, asparagine 337, asparagine 456, asparagine 562, asparagine 609, and asparagine 641 are each glycosylated (N-linked (GlcNAc...) asparagine).

This sequence belongs to the BRINP family. As to expression, strongly expressed in oral keratinocytes compared to the weak expression in tongue squamous cell carcinoma (SCC). Expressed in endothelial and aortic smooth muscle cells. Overexpressed in gonadotropinomas compared to normal pituitarie tissues.

Its subcellular location is the secreted. The protein resides in the mitochondrion. Inhibits neuronal cell proliferation by negative regulation of the cell cycle transition. Promotes pituitary gonadotrope cell proliferation, migration and invasion, when overexpressed. May play a role in cell pituitary tumor development. The sequence is that of BMP/retinoic acid-inducible neural-specific protein 3 (BRINP3) from Homo sapiens (Human).